Reading from the N-terminus, the 55-residue chain is Large ribosomal subunit protein bL33 (55 aa).

Belongs to the bacterial ribosomal protein bL33 family.

In Mycobacterium leprae (strain Br4923), this protein is Large ribosomal subunit protein bL33.